A 561-amino-acid polypeptide reads, in one-letter code: Glucose-6-phosphate isomerase (561 aa).

D-glucose 6-phosphate-binding positions include G171–S172, S222–T227, Q366, E370, H401, and K525. E370 acts as the Proton donor in catalysis. Residues H401 and K525 contribute to the active site.

Belongs to the GPI family. In terms of assembly, homodimer.

The protein localises to the cytoplasm. The protein resides in the cytosol. It catalyses the reaction alpha-D-glucose 6-phosphate = beta-D-fructose 6-phosphate. It participates in carbohydrate degradation; glycolysis; D-glyceraldehyde 3-phosphate and glycerone phosphate from D-glucose: step 2/4. In the cytoplasm, catalyzes the conversion of glucose-6-phosphate to fructose-6-phosphate, the second step in glycolysis, and the reverse reaction during gluconeogenesis. The chain is Glucose-6-phosphate isomerase (pgi-1) from Neurospora crassa (strain ATCC 24698 / 74-OR23-1A / CBS 708.71 / DSM 1257 / FGSC 987).